The primary structure comprises 256 residues: Venom allergen-1 (256 aa).

The first 21 residues, 1 to 21, serve as a signal peptide directing secretion; that stretch reads MAFNGIALLITATIFIGSCYA. The 147-residue stretch at 65–211 folds into the SCP domain; sequence LNTHNKLRAE…MINYYLVCNY (147 aa). 2 N-linked (GlcNAc...) asparagine glycosylation sites follow: N146 and N210.

Belongs to the CRISP family.

The protein localises to the secreted. In terms of biological role, activates autophagy in human monocytic cells, dendritic cells and macrophages. Its function is as follows. (Microbial infection) Promotes Zika virus replication in human dendritic cells and macrophages. Facilitates Zika virus transmission from infected mosquitoes to the host in mouse model. The protein is Venom allergen-1 of Aedes albopictus (Asian tiger mosquito).